Consider the following 197-residue polypeptide: MIPIVIEESGRGERAFDIYSRLLRERIIFLGEAVTSDSANRIVAQMLFLEAEDPEKDIYLYINSPGGSVYDGLGIFDTMQHIKPDVHTVCVGLAASMGAFLLCAGTKGKRSSLQHSRIMIHQPLGGARGQASDIRIQADEILYLKERLNQELSDRTGQPLDRIQQDTDRDFFMSPGEAVEYGLIDSVIDKRPIQAVE.

The Nucleophile role is filled by Ser96. The active site involves His121.

This sequence belongs to the peptidase S14 family. As to quaternary structure, fourteen ClpP subunits assemble into 2 heptameric rings which stack back to back to give a disk-like structure with a central cavity, resembling the structure of eukaryotic proteasomes.

Its subcellular location is the cytoplasm. The catalysed reaction is Hydrolysis of proteins to small peptides in the presence of ATP and magnesium. alpha-casein is the usual test substrate. In the absence of ATP, only oligopeptides shorter than five residues are hydrolyzed (such as succinyl-Leu-Tyr-|-NHMec, and Leu-Tyr-Leu-|-Tyr-Trp, in which cleavage of the -Tyr-|-Leu- and -Tyr-|-Trp bonds also occurs).. Functionally, cleaves peptides in various proteins in a process that requires ATP hydrolysis. Has a chymotrypsin-like activity. Plays a major role in the degradation of misfolded proteins. The sequence is that of ATP-dependent Clp protease proteolytic subunit 2 from Parasynechococcus marenigrum (strain WH8102).